The sequence spans 616 residues: Glycogenin-1 (616 aa).

Residues leucine 10, tyrosine 16, and arginine 95 each contribute to the UDP site. The UDP-alpha-D-glucose site is built by leucine 10, tyrosine 16, arginine 95, lysine 104, aspartate 120, aspartate 122, asparagine 158, serine 159, aspartate 185, aspartate 188, and glutamine 189. Residues aspartate 120 and aspartate 122 each contribute to the UDP site. Aspartate 120 and aspartate 122 together coordinate Mn(2+). O-linked (Glc...) tyrosine glycosylation occurs at tyrosine 230. Histidine 247, glycine 250, and lysine 253 together coordinate UDP. A Mn(2+)-binding site is contributed by histidine 247. Residues glycine 250 and lysine 253 each coordinate UDP-alpha-D-glucose. Positions 283 to 302 are enriched in basic and acidic residues; that stretch reads HQLNNEVSKPKISDSDKTET. Disordered stretches follow at residues 283–320, 335–354, and 371–516; these read HQLNNEVSKPKISDSDKTETPETITPVDAPPSNEPTTN, NQNAEPVPNSDHSPAPNPVP, and TNQP…SVDD. The span at 377 to 386 shows a compositional bias: basic and acidic residues; sequence ESREYSKEND. Polar residues predominate over residues 400-419; the sequence is SPPNSTQEPNSSYSVVSTQA. Low complexity predominate over residues 450–461; the sequence is STAASSNNNVSN. Polar residues-rich tracts occupy residues 462-485 and 492-503; these read QPDNKNFSNSKENNISVEPSPSNP and DNIQKPSVSTND. Residue tyrosine 598 is glycosylated (O-linked (Glc...) tyrosine).

It belongs to the glycosyltransferase 8 family. Glycogenin subfamily. Requires Mn(2+) as cofactor.

It localises to the cytoplasm. The protein localises to the vacuole. The catalysed reaction is L-tyrosyl-[glycogenin] + UDP-alpha-D-glucose = alpha-D-glucosyl-L-tyrosyl-[glycogenin] + UDP + H(+). It catalyses the reaction [1,4-alpha-D-glucosyl](n)-L-tyrosyl-[glycogenin] + UDP-alpha-D-glucose = [1,4-alpha-D-glucosyl](n+1)-L-tyrosyl-[glycogenin] + UDP + H(+). Self-glucosylating initiator of glycogen synthesis. It catalyzes the formation of a short alpha (1,4)-glucosyl chain covalently attached via a glucose 1-O-tyrosyl linkage to internal tyrosine residues and these chains act as primers for the elongation reaction catalyzed by glycogen synthase. Capable of transferring glucosyl residues to unbound acceptors such as free oligoglucans or oligoglucan derivatives. This Saccharomyces cerevisiae (strain YJM789) (Baker's yeast) protein is Glycogenin-1 (GLG1).